The primary structure comprises 62 residues: Temporin-La (62 aa).

A signal peptide spans 1 to 22 (MFPLKKSLLLLFFLGTINLSFC). A propeptide spanning residues 23–47 (EEERDVDQDERRDDPGERNVQVEKR) is cleaved from the precursor. Leu60 is modified (leucine amide).

It belongs to the frog skin active peptide (FSAP) family. Temporin subfamily. Expressed by the skin glands.

It localises to the secreted. It is found in the target cell membrane. In terms of biological role, antimicrobial peptide with amphipathic alpha-helical structure that acts against both Gram-positive and Gram-negative bacteria and the fungus Candida albicans. Is active against S.aureus ATCC 25923 (MIC=2.5 ug/ml), S.suis 2 CVCC 606 (MIC=15.6 ug/ml), Salmonella ATCC 20020 (MIC=15.6 ug/ml), P.aeruginosa ATCC 227853 (MIC=60 ug/ml), and C.albicans ATCC10231 (MIC=31.25 ug/ml). Is not active against B.subtilis ADB403, E.coli ATCC 25922, and K.pneumoniae ATCC 700603. Also shows a strong antitumor activity, but no hemolytic activity. This chain is Temporin-La, found in Aquarana catesbeiana (American bullfrog).